A 337-amino-acid chain; its full sequence is UbiA prenyltransferase domain-containing protein 1 (337 aa).

Ala-2 carries the post-translational modification N-acetylalanine. 8 helical membrane passes run Leu-82–Thr-102, Phe-133–Pro-153, Leu-159–Phe-179, Leu-187–Gly-207, Ser-208–Leu-228, Ile-244–Leu-266, Thr-276–Glu-296, and Leu-314–Leu-334.

It belongs to the UbiA prenyltransferase family. As to quaternary structure, interacts with HMGCR and SOAT1.

It localises to the endoplasmic reticulum membrane. It is found in the golgi apparatus membrane. The protein localises to the mitochondrion membrane. It catalyses the reaction menadiol + (2E,6E,10E)-geranylgeranyl diphosphate = menaquinol-4 + diphosphate. It carries out the reaction all-trans-decaprenyl diphosphate + 4-hydroxybenzoate = 4-hydroxy-3-(all-trans-decaprenyl)benzoate + diphosphate. The protein operates within quinol/quinone metabolism; menaquinone biosynthesis. Its pathway is cofactor biosynthesis; ubiquinone biosynthesis. Its function is as follows. Prenyltransferase that mediates the formation of menaquinone-4 (MK-4) and coenzyme Q10. MK-4 is a vitamin K2 isoform required for endothelial cell development. Mediates the conversion of phylloquinone (PK) into MK-4, probably by cleaving the side chain of phylloquinone (PK) to release 2-methyl-1,4-naphthoquinone (menadione; K3) and then prenylating it with geranylgeranyl pyrophosphate (GGPP) to form MK-4. Also plays a role in cardiovascular development independently of MK-4 biosynthesis, by acting as a coenzyme Q10 biosynthetic enzyme: coenzyme Q10, also named ubiquinone, plays an important antioxidant role in the cardiovascular system. Mediates biosynthesis of coenzyme Q10 in the Golgi membrane, leading to protect cardiovascular tissues from NOS3/eNOS-dependent oxidative stress. The protein is UbiA prenyltransferase domain-containing protein 1 (UBIAD1) of Ailuropoda melanoleuca (Giant panda).